We begin with the raw amino-acid sequence, 245 residues long: Uridylate kinase (245 aa).

Residue 12–15 (KLSG) participates in ATP binding. The involved in allosteric activation by GTP stretch occupies residues 20 to 25 (GEKGVG). G54 contributes to the UMP binding site. Positions 55 and 59 each coordinate ATP. UMP contacts are provided by residues D74 and 135-142 (IGSPYFST). Residues N163, Y169, and D172 each contribute to the ATP site.

It belongs to the UMP kinase family. In terms of assembly, homohexamer.

It localises to the cytoplasm. The catalysed reaction is UMP + ATP = UDP + ADP. It functions in the pathway pyrimidine metabolism; CTP biosynthesis via de novo pathway; UDP from UMP (UMPK route): step 1/1. Allosterically activated by GTP. Inhibited by UTP. Its function is as follows. Catalyzes the reversible phosphorylation of UMP to UDP. This chain is Uridylate kinase, found in Streptococcus thermophilus (strain ATCC BAA-250 / LMG 18311).